A 72-amino-acid polypeptide reads, in one-letter code: Translation initiation factor IF-1 (72 aa).

Residues 1–72 enclose the S1-like domain; that stretch reads MAKEDSIEME…SKGRIVYRAR (72 aa).

The protein belongs to the IF-1 family. In terms of assembly, component of the 30S ribosomal translation pre-initiation complex which assembles on the 30S ribosome in the order IF-2 and IF-3, IF-1 and N-formylmethionyl-tRNA(fMet); mRNA recruitment can occur at any time during PIC assembly.

It is found in the cytoplasm. In terms of biological role, one of the essential components for the initiation of protein synthesis. Stabilizes the binding of IF-2 and IF-3 on the 30S subunit to which N-formylmethionyl-tRNA(fMet) subsequently binds. Helps modulate mRNA selection, yielding the 30S pre-initiation complex (PIC). Upon addition of the 50S ribosomal subunit IF-1, IF-2 and IF-3 are released leaving the mature 70S translation initiation complex. This is Translation initiation factor IF-1 from Nitrosococcus oceani (strain ATCC 19707 / BCRC 17464 / JCM 30415 / NCIMB 11848 / C-107).